The primary structure comprises 178 residues: MIMSKEKLIKSIREVPDFPIPGILFYDVTTLFKDSERLQELSDIMYEMYKDKGITKVVGIESRGFIMGPILATRLGAGFIPIRKPGKLPAETMEESYDKEYGKDTVQIHKDALNENDVVLLHDDLLATGGTMKAACNLVKKLHPKKVYVNFIIELKELNGKQVFENDQDVDIQSVLSL.

Belongs to the purine/pyrimidine phosphoribosyltransferase family. As to quaternary structure, homodimer.

The protein localises to the cytoplasm. The catalysed reaction is AMP + diphosphate = 5-phospho-alpha-D-ribose 1-diphosphate + adenine. Its pathway is purine metabolism; AMP biosynthesis via salvage pathway; AMP from adenine: step 1/1. In terms of biological role, catalyzes a salvage reaction resulting in the formation of AMP, that is energically less costly than de novo synthesis. The polypeptide is Adenine phosphoribosyltransferase (Bacteroides fragilis (strain ATCC 25285 / DSM 2151 / CCUG 4856 / JCM 11019 / LMG 10263 / NCTC 9343 / Onslow / VPI 2553 / EN-2)).